We begin with the raw amino-acid sequence, 307 residues long: Olfactory receptor 5AC1 (307 aa).

Residues 1–28 (MAEENKILVTHFVLTGLTDHPGLQAPLF) lie on the Extracellular side of the membrane. The helical transmembrane segment at 29–49 (LVFLVIYLITLVGNLGLMALI) threads the bilayer. Topologically, residues 50-56 (WKDPHLH) are cytoplasmic. A helical membrane pass occupies residues 57 to 77 (TPIYLFLGSLAFADACTSSSV). Residues 78-99 (TSKMLINFLSKNHMLSMAKCAT) lie on the Extracellular side of the membrane. The cysteines at positions 97 and 179 are disulfide-linked. The chain crosses the membrane as a helical span at residues 100 to 120 (QFYFFGSNATTECFLLVVMAY). Over 121-143 (DRYVAICNPLLYPVVMSNSLCTQ) the chain is Cytoplasmic. A helical transmembrane segment spans residues 144 to 164 (FIGISYFIGFLHSAIHVGLLF). At 165 to 195 (RLTFCRSNIIHYFYCEILQLFKISCTNPTVN) the chain is on the extracellular side. The helical transmembrane segment at 196-216 (ILLIFIFSAFIQVFTFMTLIV) threads the bilayer. The Cytoplasmic portion of the chain corresponds to 217–239 (SYSYILSAILKKKSEKGRSKAFS). Residues 240 to 260 (TCSAHLLSVSLFYGTLFFMYV) form a helical membrane-spanning segment. The Extracellular portion of the chain corresponds to 261-271 (SSRSGSAADQA). The chain crosses the membrane as a helical span at residues 272–292 (KMYSLFYTIIIPLLNPFIYSL). Over 293 to 307 (RNKEVIDALRRIMKK) the chain is Cytoplasmic.

Belongs to the G-protein coupled receptor 1 family.

Its subcellular location is the cell membrane. In terms of biological role, odorant receptor. The chain is Olfactory receptor 5AC1 (OR5AC1) from Homo sapiens (Human).